Here is a 310-residue protein sequence, read N- to C-terminus: Tagatose-6-phosphate kinase (310 aa).

Belongs to the carbohydrate kinase PfkB family. LacC subfamily.

The catalysed reaction is D-tagatofuranose 6-phosphate + ATP = D-tagatofuranose 1,6-bisphosphate + ADP + H(+). Its pathway is carbohydrate metabolism; D-tagatose 6-phosphate degradation; D-glyceraldehyde 3-phosphate and glycerone phosphate from D-tagatose 6-phosphate: step 1/2. In Staphylococcus epidermidis (strain ATCC 35984 / DSM 28319 / BCRC 17069 / CCUG 31568 / BM 3577 / RP62A), this protein is Tagatose-6-phosphate kinase.